The sequence spans 185 residues: Ribosome-recycling factor (185 aa).

This sequence belongs to the RRF family.

It is found in the cytoplasm. Its function is as follows. Responsible for the release of ribosomes from messenger RNA at the termination of protein biosynthesis. May increase the efficiency of translation by recycling ribosomes from one round of translation to another. This Coxiella burnetii (strain CbuK_Q154) (Coxiella burnetii (strain Q154)) protein is Ribosome-recycling factor.